A 240-amino-acid chain; its full sequence is uncharacterized protein (240 aa).

Over residues 197–210 (PLKSHSASRLNHLT) the composition is skewed to polar residues. A disordered region spans residues 197–222 (PLKSHSASRLNHLTPSPRPGETPLEN).

This is an uncharacterized protein from Caenorhabditis elegans.